A 76-amino-acid chain; its full sequence is Zinc finger protein 706 (76 aa).

Low complexity predominate over residues 1 to 13 (MARGQQKIQSQQK). Disordered regions lie at residues 1-32 (MARG…QKAA) and 53-76 (TFKQ…DVQA). The segment covering 14–25 (NAKKQAGQKKKQ) has biased composition (basic residues). The segment at 39-62 (YTCTVCRTQMPDPKTFKQHFESKH) adopts a C2H2-type zinc-finger fold. Over residues 53 to 62 (TFKQHFESKH) the composition is skewed to basic and acidic residues.

It localises to the cytoplasm. The protein resides in the nucleus. Its function is as follows. Transcription repressor involved in the exit of embryonic stem cells (ESCs) from self-renewal. Acts by repressing expression of KLF4. The chain is Zinc finger protein 706 from Homo sapiens (Human).